The chain runs to 378 residues: S-adenosylmethionine synthase (378 aa).

His-15 is a binding site for ATP. Asp-17 provides a ligand contact to Mg(2+). Glu-43 contributes to the K(+) binding site. L-methionine is bound by residues Glu-56 and Gln-99. The tract at residues 99–109 is flexible loop; it reads QSPDINQGINR. ATP is bound by residues 164–166, 230–231, Asp-239, 245–246, Ala-262, and Lys-266; these read DAK, RF, and RK. An L-methionine-binding site is contributed by Asp-239. Lys-270 lines the L-methionine pocket.

It belongs to the AdoMet synthase family. As to quaternary structure, homotetramer; dimer of dimers. Requires Mg(2+) as cofactor. K(+) serves as cofactor.

It localises to the cytoplasm. The catalysed reaction is L-methionine + ATP + H2O = S-adenosyl-L-methionine + phosphate + diphosphate. The protein operates within amino-acid biosynthesis; S-adenosyl-L-methionine biosynthesis; S-adenosyl-L-methionine from L-methionine: step 1/1. Its function is as follows. Catalyzes the formation of S-adenosylmethionine (AdoMet) from methionine and ATP. The overall synthetic reaction is composed of two sequential steps, AdoMet formation and the subsequent tripolyphosphate hydrolysis which occurs prior to release of AdoMet from the enzyme. The polypeptide is S-adenosylmethionine synthase (Buchnera aphidicola subsp. Acyrthosiphon pisum (strain 5A)).